Reading from the N-terminus, the 274-residue chain is Penicillin-insensitive murein endopeptidase (274 aa).

A signal peptide spans 1–19 (MNKTAIALLALLASSASLA). 3 cysteine pairs are disulfide-bonded: C44-C265, C187-C235, and C216-C223. Zn(2+)-binding residues include H110, H113, D120, D147, H150, and H211. The interval 227–274 (PLPPPGDGCGAELQSWFEPPKPGTTKPEKKTPPPLPPSCQALLDEHVI) is disordered.

This sequence belongs to the peptidase M74 family. In terms of assembly, dimer. The cofactor is Zn(2+).

It localises to the periplasm. Murein endopeptidase that cleaves the D-alanyl-meso-2,6-diamino-pimelyl amide bond that connects peptidoglycan strands. Likely plays a role in the removal of murein from the sacculus. This Escherichia coli (strain ATCC 8739 / DSM 1576 / NBRC 3972 / NCIMB 8545 / WDCM 00012 / Crooks) protein is Penicillin-insensitive murein endopeptidase.